Consider the following 137-residue polypeptide: Large-conductance mechanosensitive channel (137 aa).

The next 2 membrane-spanning stretches (helical) occupy residues 9–29 (AFAV…GAAF) and 79–99 (IQTV…VKAI).

The protein belongs to the MscL family. Homopentamer.

It is found in the cell inner membrane. In terms of biological role, channel that opens in response to stretch forces in the membrane lipid bilayer. May participate in the regulation of osmotic pressure changes within the cell. The protein is Large-conductance mechanosensitive channel of Pseudomonas aeruginosa (strain ATCC 15692 / DSM 22644 / CIP 104116 / JCM 14847 / LMG 12228 / 1C / PRS 101 / PAO1).